The following is a 383-amino-acid chain: MTAPAELSPTLQLACDLIRRPSVTPVDADCQTQMMNRLGAVGFQLEPMRFEDVDNFWATHGTQDGPVLCFAGHTDVVPTGPVQQWQHEPFEALIDADGMLCGRGAADMKGSLASMVVASERFVQDYPNHRGKVAFLITSDEEGPAHHGTKAVVELLKARNERLDWCIVGEPSSTTLLGDVVKNGRRGSLGAKLTVRGKQGHVAYPHLARNPIHLAAPALAELAAEHWDEGNAFFPPTSFQISNLNSGTGATNVVPGDLTALFNFRFSTESTVEGLQERVAAILDKHQLEWSIDWALSGLPFLTEPGELLDAVSSSIKAVTGRETQPSTSGGTSDGRFIATMGTQVVELGPVNATIHQVDERILASDLDLLTEIYYQTLVRLLA.

H73 contributes to the Zn(2+) binding site. D75 is a catalytic residue. Zn(2+) is bound at residue D107. E141 serves as the catalytic Proton acceptor. Zn(2+)-binding residues include E142, E170, and H356.

Belongs to the peptidase M20A family. DapE subfamily. As to quaternary structure, homodimer. Zn(2+) is required as a cofactor. Requires Co(2+) as cofactor.

The catalysed reaction is N-succinyl-(2S,6S)-2,6-diaminopimelate + H2O = (2S,6S)-2,6-diaminopimelate + succinate. Its pathway is amino-acid biosynthesis; L-lysine biosynthesis via DAP pathway; LL-2,6-diaminopimelate from (S)-tetrahydrodipicolinate (succinylase route): step 3/3. Catalyzes the hydrolysis of N-succinyl-L,L-diaminopimelic acid (SDAP), forming succinate and LL-2,6-diaminopimelate (DAP), an intermediate involved in the bacterial biosynthesis of lysine and meso-diaminopimelic acid, an essential component of bacterial cell walls. This chain is Succinyl-diaminopimelate desuccinylase, found in Pseudomonas entomophila (strain L48).